The primary structure comprises 174 residues: NADH-quinone oxidoreductase subunit B (174 aa).

[4Fe-4S] cluster-binding residues include C51, C52, C116, and C146.

The protein belongs to the complex I 20 kDa subunit family. As to quaternary structure, NDH-1 is composed of 14 different subunits. Subunits NuoB, C, D, E, F, and G constitute the peripheral sector of the complex. Requires [4Fe-4S] cluster as cofactor.

The protein resides in the cell inner membrane. It catalyses the reaction a quinone + NADH + 5 H(+)(in) = a quinol + NAD(+) + 4 H(+)(out). NDH-1 shuttles electrons from NADH, via FMN and iron-sulfur (Fe-S) centers, to quinones in the respiratory chain. The immediate electron acceptor for the enzyme in this species is believed to be ubiquinone. Couples the redox reaction to proton translocation (for every two electrons transferred, four hydrogen ions are translocated across the cytoplasmic membrane), and thus conserves the redox energy in a proton gradient. This chain is NADH-quinone oxidoreductase subunit B, found in Anaplasma phagocytophilum (strain HZ).